A 111-amino-acid chain; its full sequence is Universal stress protein B (111 aa).

2 helical membrane passes run 1 to 21 (MFSTIALFWALCLVCIINMMR) and 90 to 110 (FILTSSLSGLVVICLISMLIW).

It belongs to the universal stress protein B family.

It is found in the cell inner membrane. The sequence is that of Universal stress protein B from Photorhabdus laumondii subsp. laumondii (strain DSM 15139 / CIP 105565 / TT01) (Photorhabdus luminescens subsp. laumondii).